The sequence spans 143 residues: Hemoglobin subunit alpha-2 (143 aa).

S2 is modified (N-acetylserine). A Globin domain is found at 2-143 (SLSSKDKATV…LALALSEKYR (142 aa)). H60 is an O2 binding site. H89 contacts heme b.

The protein belongs to the globin family. Hb 2 is a heterotetramer of two alpha-2 and two beta-1 chains. Hb 3 is a heterotetramer of two alpha-2 and two beta-2 chains. Red blood cells.

In terms of biological role, involved in oxygen transport from gills to the various peripheral tissues. The polypeptide is Hemoglobin subunit alpha-2 (hba2) (Arctogadus glacialis (Arctic cod)).